We begin with the raw amino-acid sequence, 76 residues long: Small ribosomal subunit protein bS18 (76 aa).

Belongs to the bacterial ribosomal protein bS18 family. As to quaternary structure, part of the 30S ribosomal subunit. Forms a tight heterodimer with protein bS6.

Its function is as follows. Binds as a heterodimer with protein bS6 to the central domain of the 16S rRNA, where it helps stabilize the platform of the 30S subunit. This chain is Small ribosomal subunit protein bS18, found in Desulfitobacterium hafniense (strain Y51).